A 384-amino-acid chain; its full sequence is Anhydro-N-acetylmuramic acid kinase (384 aa).

Position 17-24 (17-24 (GTSMDGVD)) interacts with ATP.

The protein belongs to the anhydro-N-acetylmuramic acid kinase family.

The enzyme catalyses 1,6-anhydro-N-acetyl-beta-muramate + ATP + H2O = N-acetyl-D-muramate 6-phosphate + ADP + H(+). Its pathway is amino-sugar metabolism; 1,6-anhydro-N-acetylmuramate degradation. The protein operates within cell wall biogenesis; peptidoglycan recycling. Catalyzes the specific phosphorylation of 1,6-anhydro-N-acetylmuramic acid (anhMurNAc) with the simultaneous cleavage of the 1,6-anhydro ring, generating MurNAc-6-P. Is required for the utilization of anhMurNAc either imported from the medium or derived from its own cell wall murein, and thus plays a role in cell wall recycling. The sequence is that of Anhydro-N-acetylmuramic acid kinase from Burkholderia thailandensis (strain ATCC 700388 / DSM 13276 / CCUG 48851 / CIP 106301 / E264).